Reading from the N-terminus, the 148-residue chain is Large ribosomal subunit protein bL9 (148 aa).

It belongs to the bacterial ribosomal protein bL9 family.

In terms of biological role, binds to the 23S rRNA. The chain is Large ribosomal subunit protein bL9 from Prosthecochloris aestuarii (strain DSM 271 / SK 413).